A 417-amino-acid polypeptide reads, in one-letter code: Interferon-gamma-inducible GTPase 10 (417 aa).

G2 is lipidated: N-myristoyl glycine. The region spanning 67 to 249 is the IRG-type G domain; it reads APLNIAVTGE…PSLESTLLEE (183 aa). 8 residues coordinate GDP: G78, A79, S82, T83, S101, K183, D185, and S231. A run of 2 helical transmembrane segments spans residues 284-302 and 370-387; these read EALKAGASATIPMMSFFND and AVTGGFVATGLYFRKSYY.

It belongs to the TRAFAC class dynamin-like GTPase superfamily. GB1/RHD3 GTPase family. GB1 subfamily. Homooligomer; homooligomerization occurs upon GTP-binding and is required for the association with membranous structures. Homodimer; GDP-binding induces formation of an inactive head-to-head homodimer. Myristoylation is required for localization to pathogen-containing vacuoles. In terms of processing, (Microbial infection) Phosphorylated by Toxoplasma gondii ROP18.

The protein localises to the membrane. It localises to the cytoplasmic vesicle membrane. It carries out the reaction GTP + H2O = GDP + phosphate + H(+). Functionally, interferon (IFN)-inducible GTPase that plays important roles in innate immunity against a diverse range of bacterial, viral and protozoan pathogens by mediating cytosolic release of pathogenic ligands that activate the inflammasomes. Following infection, recruited to the membrane of pathogens in a GBP-dependent manner and mediates disruption of the pathogen membrane, liberating ligands that are detected by inflammasomes, such as lipopolysaccharide (LPS) that activates the non-canonical CASP4/CASP11 inflammasome or double-stranded DNA (dsDNA) that activates the AIM2 inflammasome. Promotes AIM2 and NLRP3 inflammasome activation following A.fumigatus infection by liberating beta-glucan, which directly triggers inflammasome assembly. Promotes NLRP3 inflammasome activation following influenza A virus infection. The sequence is that of Interferon-gamma-inducible GTPase 10 from Mus musculus (Mouse).